Reading from the N-terminus, the 352-residue chain is Peptide chain release factor 1 (352 aa).

Residue glutamine 233 is modified to N5-methylglutamine. The interval 288-309 (NAKDRKEQVGSGDRSERIRTYN) is disordered. Positions 289–306 (AKDRKEQVGSGDRSERIR) are enriched in basic and acidic residues.

Belongs to the prokaryotic/mitochondrial release factor family. Post-translationally, methylated by PrmC. Methylation increases the termination efficiency of RF1.

Its subcellular location is the cytoplasm. Peptide chain release factor 1 directs the termination of translation in response to the peptide chain termination codons UAG and UAA. In Helicobacter pylori (strain Shi470), this protein is Peptide chain release factor 1.